Here is a 300-residue protein sequence, read N- to C-terminus: Cation-efflux pump FieF (300 aa).

4 consecutive transmembrane segments (helical) span residues 12 to 32 (AAIAATAMASLLLLIKIFAWW), 39 to 59 (ILAALVDSLVDIGASLTNLLV), 82 to 102 (AALAQSMFISGSALFLFLTGI), and 114 to 134 (PGVGVIVTIVALICTIILVSF). Zn(2+)-binding residues include aspartate 45 and aspartate 49. Histidine 153 and aspartate 157 together coordinate Zn(2+). Helical transmembrane passes span 156-176 (SDVMMNGAILLALGLSWYGWH) and 178-198 (ADALFALGIGIYILYSALRMG).

This sequence belongs to the cation diffusion facilitator (CDF) transporter (TC 2.A.4) family. FieF subfamily. Homodimer.

It localises to the cell inner membrane. The catalysed reaction is Zn(2+)(in) + H(+)(out) = Zn(2+)(out) + H(+)(in). It catalyses the reaction Cd(2+)(in) + H(+)(out) = Cd(2+)(out) + H(+)(in). It carries out the reaction Fe(2+)(in) + H(+)(out) = Fe(2+)(out) + H(+)(in). In terms of biological role, divalent metal cation transporter which exports Zn(2+), Cd(2+) and possibly Fe(2+). May be involved in zinc and iron detoxification by efflux. The chain is Cation-efflux pump FieF from Escherichia coli O7:K1 (strain IAI39 / ExPEC).